The following is a 485-amino-acid chain: MVRLGPKKPPARKGSMADVPANLMEQIHGLETLFTVSSEKMRSIVKHFISELDKGLSKKGGNIPMIPGWVVEYPTGKETGDFLALDLGGTNLRVVLVKLGGNHDFDTTQNKYRLPDHLRTGTSEQLWSFIAKCLKEFVDEWYPDGVSEPLPLGFTFSYPASQKKINSGVLQRWTKGFDIEGVEGHDVVPMLQEQIEKLNIPINVVALINDTTGTLVASLYTDPQTKMGIIIGTGVNGAYYDVVSGIEKLEGLLPEDIGPDSPMAINCEYGSFDNEHLVLPRTKYDVIIDEESPRPGQQAFEKMTSGYYLGEIMRLVLLDLYDSGFIFKDQDISKLKEAYVMDTSYPSKIEDDPFENLEDTDDLFKTNLNIETTVVERKLIRKLAELVGTRAARLTVCGVSAICDKRGYKTAHIAADGSVFNRYPGYKEKAAQALKDIYNWDVEKMEDHPIQLVAAEDGSGVGAAIIACLTQKRLAAGKSVGIKGE.

At Ser15 the chain carries Phosphoserine. Residues 21–468 (ANLMEQIHGL…SGVGAAIIAC (448 aa)) form the Hexokinase domain. The segment at 75–208 (TGKETGDFLA…NIPINVVALI (134 aa)) is hexokinase small subdomain. Lys111 provides a ligand contact to ATP. The glucose-binding stretch occupies residues 151-177 (PLGFTFSYPASQKKINSGVLQRWTKGF). Residues 209 to 457 (NDTTGTLVAS…HPIQLVAAED (249 aa)) form a hexokinase large subdomain region.

Monomer and homodimer. The monomeric form is active, the homodimeric form inactive.

The enzyme catalyses a D-hexose + ATP = a D-hexose 6-phosphate + ADP + H(+). The catalysed reaction is D-fructose + ATP = D-fructose 6-phosphate + ADP + H(+). It catalyses the reaction D-glucose + ATP = D-glucose 6-phosphate + ADP + H(+). It participates in carbohydrate metabolism; hexose metabolism. It functions in the pathway carbohydrate degradation; glycolysis; D-glyceraldehyde 3-phosphate and glycerone phosphate from D-glucose: step 1/4. In terms of biological role, catalyzes the phosphorylation of hexose, such as D-glucose and D-fructose, to hexose 6-phosphate (D-glucose 6-phosphate and D-fructose 6-phosphate, respectively). Has higher affinity for D-glucose. Mediates the initial step of glycolysis by catalyzing phosphorylation of D-glucose to D-glucose 6-phosphate. This is Hexokinase (RAG5) from Kluyveromyces lactis (strain ATCC 8585 / CBS 2359 / DSM 70799 / NBRC 1267 / NRRL Y-1140 / WM37) (Yeast).